The following is a 1032-amino-acid chain: MASVPVYCLCRLPYDVTRFMIECDVCQDWFHGSCVGVEEDKAAEIDLYHCPNCQVTHGPSVMRKRRGAVKHADVGLGRDSGRPVKTGSAQFVRELRCRTFPSADEVLLKPTGAQLTVEFLEERSFSVPVLVLRKDGLGMNLPPSSFSVTDVEHYIGTEKEIDVIDVSRQADLKMKLGEFVEYYNSPNRDRVLNVISLEFSDTRLSNLVETPKIVRKLSWVENLWPEESIFERPNVQKYCLMGVKDSYTDFHIDFGGTSVWYHVLRGEKIFYLIRPTAANLSLFERWSSSSNQNELFFGDQVDMCYKCSVKQGNTLFIPTGWIHAVLTPVDCLAFGGNFLHSLNIDMQLRAYEIEKRLSTADLFKFPNFETVCWYVGKHLLDTFRGLRENRRHPATYLVHGAKALNNAFRGWTRKESLGEHEQEIPDTIKTQQLVKDLAKEIRLVEDIFQQNIGRSGTPFGGSQGLPSPHPKAQLNTPLTFSQHLSKKRGPKPKEAFGGGGVGPPGAKKKSQKGKEIKTEAGELDLLEIHTKHTLKKFQPGCKVKKSKLELPDDCLDDFEEKINKSKLKLVLTNGKLQGKKGRAGSANGAGSSLQQFQPHMATLSDFDSEDELQIDETPPPRRRPSLPSKKKLAGLPRKLPRAKPCSDPHRIREPGEVDFDIEEDYTTDEEMLTMQGVKGGAGGILDLLKASKQVAGLDSALSEEAPASPSTRDAIQGMLSMANPPSSSSSSSSSSPLSISGGGEMMGLMKEKGGREGWMSGVKKSERKAVFQRPGKRPIKRPARHLSDDESLDEQETLGTCFKDSDYVYPSLESDEEDHVSKSKMKRKRNWDDTPWSPKARVTPTLPKQERPVREGARVASVETGLAAAAAKLAQQEQQKTITKRKYTKKKTPQEKVHSTVAQLQHQPDSAPVSPPLPSEPPVDCIVEERRVEVYSASLLDHEYTAGPGPFSPGGPRGSGAMAPGVFLTSRRPSLSPQNSSSYSPSAPSPGGLVTPTSAGACQGKRPKKGLATAKQRLGKILKIHRNGKLLL.

The PHD-type zinc-finger motif lies at 5-56 (PVYCLCRLPYDVTRFMIECDVCQDWFHGSCVGVEEDKAAEIDLYHCPNCQVT). The tract at residues 65–83 (RRGAVKHADVGLGRDSGRP) is linker. A JmjC domain is found at 199–355 (FSDTRLSNLV…MQLRAYEIEK (157 aa)). Thr248 is a substrate binding site. Fe cation contacts are provided by His251 and Asp253. Position 268 (Lys268) interacts with substrate. Residue His323 coordinates Fe cation. Disordered regions lie at residues 455 to 515 (SGTP…KGKE), 577 to 660 (QGKK…VDFD), 697 to 857 (LDSA…REGA), 875 to 923 (QQEQ…EPPV), and 943 to 1015 (EYTA…ATAK). Residues 473 to 483 (QLNTPLTFSQH) are compositionally biased toward polar residues. The segment covering 583 to 592 (AGSANGAGSS) has biased composition (low complexity). Residues 620–632 (PRRRPSLPSKKKL) show a composition bias toward basic residues. Positions 644–655 (PCSDPHRIREPG) are enriched in basic and acidic residues. 2 stretches are compositionally biased toward low complexity: residues 699–710 (SALSEEAPASPS) and 724–739 (PPSS…PLSI). Residues 774 to 784 (PGKRPIKRPAR) show a composition bias toward basic residues. Over residues 848-857 (KQERPVREGA) the composition is skewed to basic and acidic residues. Positions 882 to 891 (ITKRKYTKKK) are enriched in basic residues. The span at 970–990 (SRRPSLSPQNSSSYSPSAPSP) shows a compositional bias: low complexity.

It belongs to the JHDM1 histone demethylase family. JHDM1D subfamily. Fe(2+) is required as a cofactor.

It is found in the nucleus. The protein localises to the nucleolus. It carries out the reaction N(6),N(6)-dimethyl-L-lysyl(36)-[histone H3] + 2 2-oxoglutarate + 2 O2 = L-lysyl(36)-[histone H3] + 2 formaldehyde + 2 succinate + 2 CO2. The enzyme catalyses N(6),N(6)-dimethyl-L-lysyl(9)-[histone H3] + 2 2-oxoglutarate + 2 O2 = L-lysyl(9)-[histone H3] + 2 formaldehyde + 2 succinate + 2 CO2. Its function is as follows. Histone lysine demethylase with selectivity for the di- and monomethyl states that plays a key role cell cycle progression, rDNA transcription and brain development. Demethylates mono- and dimethylated histone H3 'Lys-9' residue (H3K9Me1 and H3K9Me2), dimethylated H3 'Lys-27' (H3K27Me2) and monomethylated histone H4 'Lys-20' residue (H4K20Me1). Acts as a transcription activator as H3K9Me1, H3K9Me2, H3K27Me2 and H4K20Me1 are epigenetic repressive marks. Involved in cell cycle progression by being required to control G1-S transition. Acts as a coactivator of rDNA transcription, by activating polymerase I (pol I) mediated transcription of rRNA genes. Has activity toward H4K20Me1 only when nucleosome is used as a substrate and when not histone octamer is used as substrate. Required for brain development, probably by regulating expression of neuron-specific genes. This is Histone lysine demethylase PHF8 (phf8) from Danio rerio (Zebrafish).